A 458-amino-acid polypeptide reads, in one-letter code: UDP-N-acetylmuramate--L-alanine ligase (458 aa).

An ATP-binding site is contributed by 112-118 (GTHGKTT).

This sequence belongs to the MurCDEF family.

The protein localises to the cytoplasm. It catalyses the reaction UDP-N-acetyl-alpha-D-muramate + L-alanine + ATP = UDP-N-acetyl-alpha-D-muramoyl-L-alanine + ADP + phosphate + H(+). It participates in cell wall biogenesis; peptidoglycan biosynthesis. Functionally, cell wall formation. The sequence is that of UDP-N-acetylmuramate--L-alanine ligase from Geotalea uraniireducens (strain Rf4) (Geobacter uraniireducens).